The chain runs to 621 residues: Pentatricopeptide repeat-containing protein At1g12620 (621 aa).

16 PPR repeats span residues 36 to 70, 71 to 105, 106 to 140, 141 to 175, 176 to 210, 211 to 245, 246 to 280, 281 to 315, 316 to 350, 351 to 385, 386 to 420, 421 to 455, 456 to 490, 491 to 525, 526 to 560, and 561 to 595; these read GKVS…RPRP, RLID…GIAH, NLYT…GYEP, DTVT…GHKP, TLIT…GFQP, NEVT…KIKL, DAVK…GFKA, DIII…KITP, DVVA…GISP, DTVT…GCGP, NIRT…GVVA, DTVT…RVRP, DIVS…KMEL, DIGI…GVKP, DVKT…GHSP, and NGCT…GFSV.

This sequence belongs to the PPR family. P subfamily.

The polypeptide is Pentatricopeptide repeat-containing protein At1g12620 (Arabidopsis thaliana (Mouse-ear cress)).